A 550-amino-acid polypeptide reads, in one-letter code: Complement control protein (550 aa).

Residues methionine 1–glycine 19 form the signal peptide. 4 consecutive Sushi domains span residues glutamate 23–lysine 83, lysine 84–lysine 150, glutamate 151–leucine 209, and alanine 210–leucine 268. Disulfide bonds link cysteine 25–cysteine 68, cysteine 53–cysteine 81, cysteine 86–cysteine 131, cysteine 116–cysteine 148, cysteine 153–cysteine 194, cysteine 180–cysteine 207, cysteine 212–cysteine 254, and cysteine 240–cysteine 266. N-linked (GlcNAc...) asparagine; by host glycans are attached at residues asparagine 63 and asparagine 111. A glycan (N-linked (GlcNAc...) asparagine; by host) is linked at asparagine 197. N-linked (GlcNAc...) asparagine; by host glycosylation is found at asparagine 255, asparagine 275, and asparagine 299. Positions glutamate 269–threonine 338 are disordered. Composition is skewed to polar residues over residues glutamate 288–glutamate 302 and threonine 312–glutamate 321. 4 N-linked (GlcNAc...) asparagine; by host glycosylation sites follow: asparagine 334, asparagine 371, asparagine 374, and asparagine 378. Disordered stretches follow at residues threonine 387–threonine 408 and isoleucine 420–alanine 516. Over residues proline 424–histidine 440 the composition is skewed to polar residues. Asparagine 426, asparagine 445, asparagine 455, and asparagine 483 each carry an N-linked (GlcNAc...) asparagine; by host glycan. Polar residues predominate over residues isoleucine 450–lysine 476. A compositionally biased stretch (polar residues) spans lysine 484–aspartate 495. Residues isoleucine 528 to phenylalanine 548 traverse the membrane as a helical segment.

The protein localises to the host membrane. The protein resides in the virion membrane. Inhibits the complement component of the host innate immune response. Regulates host C3 convertases, accelerating their decay, and acts as a cofactor for factor I degradation of C4b and C3b. Also binds heparin, and therefore may play two distinct roles when incorporated in virion membranes: immune evasion and host cell binding. In Human herpesvirus 8 type P (isolate GK18) (HHV-8), this protein is Complement control protein (ORF4).